The primary structure comprises 311 residues: tRNA-cytidine(32) 2-sulfurtransferase (311 aa).

The PP-loop motif signature appears at 47–52 (SGGKDS). Residues Cys122, Cys125, and Cys213 each contribute to the [4Fe-4S] cluster site.

The protein belongs to the TtcA family. Homodimer. The cofactor is Mg(2+). [4Fe-4S] cluster is required as a cofactor.

The protein resides in the cytoplasm. The enzyme catalyses cytidine(32) in tRNA + S-sulfanyl-L-cysteinyl-[cysteine desulfurase] + AH2 + ATP = 2-thiocytidine(32) in tRNA + L-cysteinyl-[cysteine desulfurase] + A + AMP + diphosphate + H(+). It functions in the pathway tRNA modification. Catalyzes the ATP-dependent 2-thiolation of cytidine in position 32 of tRNA, to form 2-thiocytidine (s(2)C32). The sulfur atoms are provided by the cysteine/cysteine desulfurase (IscS) system. The chain is tRNA-cytidine(32) 2-sulfurtransferase from Enterobacter sp. (strain 638).